The chain runs to 358 residues: UDP-N-acetylglucosamine--N-acetylmuramyl-(pentapeptide) pyrophosphoryl-undecaprenol N-acetylglucosamine transferase (358 aa).

Residues 12 to 14 (TGG), N124, R162, S185, I242, 261 to 266 (ALTVSE), and Q287 contribute to the UDP-N-acetyl-alpha-D-glucosamine site.

This sequence belongs to the glycosyltransferase 28 family. MurG subfamily.

The protein resides in the cell inner membrane. It catalyses the reaction di-trans,octa-cis-undecaprenyl diphospho-N-acetyl-alpha-D-muramoyl-L-alanyl-D-glutamyl-meso-2,6-diaminopimeloyl-D-alanyl-D-alanine + UDP-N-acetyl-alpha-D-glucosamine = di-trans,octa-cis-undecaprenyl diphospho-[N-acetyl-alpha-D-glucosaminyl-(1-&gt;4)]-N-acetyl-alpha-D-muramoyl-L-alanyl-D-glutamyl-meso-2,6-diaminopimeloyl-D-alanyl-D-alanine + UDP + H(+). The protein operates within cell wall biogenesis; peptidoglycan biosynthesis. Functionally, cell wall formation. Catalyzes the transfer of a GlcNAc subunit on undecaprenyl-pyrophosphoryl-MurNAc-pentapeptide (lipid intermediate I) to form undecaprenyl-pyrophosphoryl-MurNAc-(pentapeptide)GlcNAc (lipid intermediate II). This Pseudoalteromonas translucida (strain TAC 125) protein is UDP-N-acetylglucosamine--N-acetylmuramyl-(pentapeptide) pyrophosphoryl-undecaprenol N-acetylglucosamine transferase.